The sequence spans 162 residues: N5-carboxyaminoimidazole ribonucleotide mutase (162 aa).

Residues serine 11, aspartate 14, and arginine 41 each coordinate substrate.

Belongs to the AIR carboxylase family. Class I subfamily.

It carries out the reaction 5-carboxyamino-1-(5-phospho-D-ribosyl)imidazole + H(+) = 5-amino-1-(5-phospho-D-ribosyl)imidazole-4-carboxylate. Its pathway is purine metabolism; IMP biosynthesis via de novo pathway; 5-amino-1-(5-phospho-D-ribosyl)imidazole-4-carboxylate from 5-amino-1-(5-phospho-D-ribosyl)imidazole (N5-CAIR route): step 2/2. In terms of biological role, catalyzes the conversion of N5-carboxyaminoimidazole ribonucleotide (N5-CAIR) to 4-carboxy-5-aminoimidazole ribonucleotide (CAIR). In Brucella melitensis biotype 1 (strain ATCC 23456 / CCUG 17765 / NCTC 10094 / 16M), this protein is N5-carboxyaminoimidazole ribonucleotide mutase.